Reading from the N-terminus, the 572-residue chain is Proline--tRNA ligase (572 aa).

The protein belongs to the class-II aminoacyl-tRNA synthetase family. ProS type 1 subfamily. Homodimer.

The protein localises to the cytoplasm. The catalysed reaction is tRNA(Pro) + L-proline + ATP = L-prolyl-tRNA(Pro) + AMP + diphosphate. Catalyzes the attachment of proline to tRNA(Pro) in a two-step reaction: proline is first activated by ATP to form Pro-AMP and then transferred to the acceptor end of tRNA(Pro). As ProRS can inadvertently accommodate and process non-cognate amino acids such as alanine and cysteine, to avoid such errors it has two additional distinct editing activities against alanine. One activity is designated as 'pretransfer' editing and involves the tRNA(Pro)-independent hydrolysis of activated Ala-AMP. The other activity is designated 'posttransfer' editing and involves deacylation of mischarged Ala-tRNA(Pro). The misacylated Cys-tRNA(Pro) is not edited by ProRS. In Dichelobacter nodosus (strain VCS1703A), this protein is Proline--tRNA ligase.